Reading from the N-terminus, the 351-residue chain is Mediator of RNA polymerase II transcription subunit 18 (351 aa).

Residues 153–231 (GNGDPIDIDT…LPQSLSNGVS (79 aa)) form a disordered region. Residues 163–204 (NNDKQGDNNTDKPKQEHDGKLPEAIDEDIIKNGDEKKTTHDD) are compositionally biased toward basic and acidic residues. Positions 205 to 216 (NDSDIMEIDEPN) are enriched in acidic residues. The segment covering 217 to 231 (PETQTLPQSLSNGVS) has biased composition (polar residues).

It belongs to the Mediator complex subunit 18 family. As to quaternary structure, component of the Mediator complex.

It is found in the nucleus. Functionally, component of the Mediator complex, a coactivator involved in the regulated transcription of nearly all RNA polymerase II-dependent genes. Mediator functions as a bridge to convey information from gene-specific regulatory proteins to the basal RNA polymerase II transcription machinery. Mediator is recruited to promoters by direct interactions with regulatory proteins and serves as a scaffold for the assembly of a functional preinitiation complex with RNA polymerase II and the general transcription factors. This chain is Mediator of RNA polymerase II transcription subunit 18 (SRB5), found in Candida albicans (strain SC5314 / ATCC MYA-2876) (Yeast).